A 561-amino-acid chain; its full sequence is uncharacterized protein (561 aa).

6 consecutive transmembrane segments (helical) span residues 27–49, 54–71, 83–105, 115–137, 142–162, and 177–199; these read ILEF…GLLI, FFGI…ALAL, LVYQ…SEFF, LTLF…IKLF, IIGA…AAMV, and VVGY…AIGA. An RCK C-terminal domain is found at 292–373; the sequence is QQDVPIEDTD…MSEVRRFLGD (82 aa). A run of 4 helical transmembrane segments spans residues 383–405, 409–428, 441–463, and 478–500; these read LMPF…PLPG, LSLG…GALN, ASRT…SAGV, and IAGG…MPLF.

Belongs to the AAE transporter (TC 2.A.81) family.

The protein resides in the cell membrane. This is an uncharacterized protein from Corynebacterium diphtheriae (strain ATCC 700971 / NCTC 13129 / Biotype gravis).